We begin with the raw amino-acid sequence, 201 residues long: Peptide deformylase (201 aa).

Positions 121 and 163 each coordinate Fe cation. Glutamate 164 is an active-site residue. Fe cation is bound at residue histidine 167.

This sequence belongs to the polypeptide deformylase family. Fe(2+) serves as cofactor.

The enzyme catalyses N-terminal N-formyl-L-methionyl-[peptide] + H2O = N-terminal L-methionyl-[peptide] + formate. Functionally, removes the formyl group from the N-terminal Met of newly synthesized proteins. Requires at least a dipeptide for an efficient rate of reaction. N-terminal L-methionine is a prerequisite for activity but the enzyme has broad specificity at other positions. The chain is Peptide deformylase from Synechococcus sp. (strain CC9605).